Here is a 350-residue protein sequence, read N- to C-terminus: Nicotinate-nucleotide--dimethylbenzimidazole phosphoribosyltransferase (350 aa).

E318 acts as the Proton acceptor in catalysis.

This sequence belongs to the CobT family.

The catalysed reaction is 5,6-dimethylbenzimidazole + nicotinate beta-D-ribonucleotide = alpha-ribazole 5'-phosphate + nicotinate + H(+). It participates in nucleoside biosynthesis; alpha-ribazole biosynthesis; alpha-ribazole from 5,6-dimethylbenzimidazole: step 1/2. Catalyzes the synthesis of alpha-ribazole-5'-phosphate from nicotinate mononucleotide (NAMN) and 5,6-dimethylbenzimidazole (DMB). In Citrifermentans bemidjiense (strain ATCC BAA-1014 / DSM 16622 / JCM 12645 / Bem) (Geobacter bemidjiensis), this protein is Nicotinate-nucleotide--dimethylbenzimidazole phosphoribosyltransferase.